Reading from the N-terminus, the 749-residue chain is Probable serine/threonine-protein kinase fhkD (749 aa).

An FHA domain is found at 47–150; it reads IFFGRNPKRC…NGTFVKGCIL (104 aa). Low complexity predominate over residues 84–126; it reads NNNNNDGDNNNNNNNNNNNNNNNNNNNNNNNNNNNNNNNNNNN. The interval 84-130 is disordered; it reads NNNNNDGDNNNNNNNNNNNNNNNNNNNNNNNNNNNNNNNNNNNTTKN. Residues 199 to 472 form the Protein kinase domain; it reads YSIQGILGTG…TKGALSHDWF (274 aa). ATP contacts are provided by residues 205 to 213 and lysine 228; that span reads LGTGNFSVV. Aspartate 323 functions as the Proton acceptor in the catalytic mechanism. Disordered stretches follow at residues 512–620 and 640–749; these read NIPM…PAII and CTPT…LKGS. Over residues 516-561 the composition is skewed to low complexity; that stretch reads TLNSTTTNTTSPNNNNNNNNNNNNKNNNKNIIKSLNSNSNNYNNNS. The span at 562–572 shows a compositional bias: polar residues; the sequence is VLKKTSQSPKT. Composition is skewed to low complexity over residues 590–611 and 651–667; these read NNNNNNNNNNNNNNNNNNNNNN and TNSTTTSTATSMPTSNS. Polar residues predominate over residues 668-687; that stretch reads VTMGTSSTSIPVSNSITMKS. Over residues 696-707 the composition is skewed to basic and acidic residues; the sequence is DGDKKRKEKESS. The segment covering 708-739 has biased composition (low complexity); sequence SSENVNDVIVINSNNHNNNNNNNHNINNGISS.

This sequence belongs to the protein kinase superfamily. CAMK Ser/Thr protein kinase family. CHK2 subfamily.

The catalysed reaction is L-seryl-[protein] + ATP = O-phospho-L-seryl-[protein] + ADP + H(+). It carries out the reaction L-threonyl-[protein] + ATP = O-phospho-L-threonyl-[protein] + ADP + H(+). In Dictyostelium discoideum (Social amoeba), this protein is Probable serine/threonine-protein kinase fhkD (fhkD).